A 94-amino-acid polypeptide reads, in one-letter code: Integration host factor subunit beta (94 aa).

The protein belongs to the bacterial histone-like protein family. Heterodimer of an alpha and a beta chain.

This protein is one of the two subunits of integration host factor, a specific DNA-binding protein that functions in genetic recombination as well as in transcriptional and translational control. This Xanthobacter autotrophicus (strain ATCC BAA-1158 / Py2) protein is Integration host factor subunit beta.